A 274-amino-acid polypeptide reads, in one-letter code: Energy-coupling factor transporter ATP-binding protein EcfA1 (274 aa).

The ABC transporter domain maps to 9-240; it reads CSFINVAFSY…EQELQKIRLD (232 aa). ATP is bound at residue 41 to 48; the sequence is GHNGSGKS.

It belongs to the ABC transporter superfamily. Energy-coupling factor EcfA family. In terms of assembly, forms a stable energy-coupling factor (ECF) transporter complex composed of 2 membrane-embedded substrate-binding proteins (S component), 2 ATP-binding proteins (A component) and 2 transmembrane proteins (T component).

The protein localises to the cell membrane. Functionally, ATP-binding (A) component of a common energy-coupling factor (ECF) ABC-transporter complex. Unlike classic ABC transporters this ECF transporter provides the energy necessary to transport a number of different substrates. The protein is Energy-coupling factor transporter ATP-binding protein EcfA1 of Mycoplasma genitalium (strain ATCC 33530 / DSM 19775 / NCTC 10195 / G37) (Mycoplasmoides genitalium).